A 244-amino-acid chain; its full sequence is Tegument protein UL51 (244 aa).

Residue Cys9 is the site of S-palmitoyl cysteine; by host attachment. Residues 178-244 (GVTEAPSLGH…SRAAPCVLGQ (67 aa)) are disordered. Positions 221 to 244 (PRPTASPTAPRPGPSRAAPCVLGQ) are enriched in low complexity.

This sequence belongs to the herpesviridae UL51 family. As to quaternary structure, oligomerizes. Interacts with UL7; this interaction mediates UL7 incorporation to virions. Interacts with UL14. In terms of processing, phosphorylated. Palmitoylation is necessary for Golgi localization.

The protein localises to the virion tegument. It is found in the host cytoplasm. It localises to the host Golgi apparatus. Its function is as follows. Plays several roles during the time course of infection, including egress of virus particles from the perinuclear space and secondary envelopment of cytoplasmic capsids that bud into specific trans-Golgi network (TGN)-derived membranes. Plays also an essential role in the maintenance of host cytoplasmic viral assembly center (cVAC) morphology in primary host neuronal cells. The protein is Tegument protein UL51 of Homo sapiens (Human).